A 190-amino-acid polypeptide reads, in one-letter code: Glutathione peroxidase 2 (190 aa).

Residue U40 is part of the active site. Residue U40 is a non-standard amino acid, selenocysteine.

The protein belongs to the glutathione peroxidase family. Homotetramer.

The protein localises to the cytoplasm. It localises to the cytosol. The catalysed reaction is 2 glutathione + H2O2 = glutathione disulfide + 2 H2O. It carries out the reaction a hydroperoxy polyunsaturated fatty acid + 2 glutathione = a hydroxy polyunsaturated fatty acid + glutathione disulfide + H2O. The enzyme catalyses tert-butyl hydroperoxide + 2 glutathione = tert-butanol + glutathione disulfide + H2O. It catalyses the reaction cumene hydroperoxide + 2 glutathione = 2-phenylpropan-2-ol + glutathione disulfide + H2O. The catalysed reaction is (13S)-hydroperoxy-(9Z,11E)-octadecadienoate + 2 glutathione = (13S)-hydroxy-(9Z,11E)-octadecadienoate + glutathione disulfide + H2O. It carries out the reaction (5S)-hydroperoxy-(6E,8Z,11Z,14Z)-eicosatetraenoate + 2 glutathione = (5S)-hydroxy-(6E,8Z,11Z,14Z)-eicosatetraenoate + glutathione disulfide + H2O. The enzyme catalyses (12R)-hydroperoxy-(5Z,8Z,10E,14Z)-eicosatetraenoate + 2 glutathione = (12R)-hydroxy-(5Z,8Z,10E,14Z)-eicosatetraenoate + glutathione disulfide + H2O. It catalyses the reaction (15S)-hydroperoxy-(5Z,8Z,11Z,13E)-eicosatetraenoate + 2 glutathione = (15S)-hydroxy-(5Z,8Z,11Z,13E)-eicosatetraenoate + glutathione disulfide + H2O. In terms of biological role, catalyzes the reduction of hydroperoxides in a glutathione-dependent manner thus regulating cellular redox homeostasis. Can reduce small soluble hydroperoxides such as H2O2, cumene hydroperoxide and tert-butyl hydroperoxide, as well as several fatty acid-derived hydroperoxides. Cannot reduce phosphatidycholine hydroperoxide. This Callithrix jacchus (White-tufted-ear marmoset) protein is Glutathione peroxidase 2 (GPX2).